Here is a 466-residue protein sequence, read N- to C-terminus: Argininosuccinate lyase (466 aa).

Belongs to the lyase 1 family. Argininosuccinate lyase subfamily.

It localises to the cytoplasm. The enzyme catalyses 2-(N(omega)-L-arginino)succinate = fumarate + L-arginine. Its pathway is amino-acid biosynthesis; L-arginine biosynthesis; L-arginine from L-ornithine and carbamoyl phosphate: step 3/3. This Bartonella bacilliformis (strain ATCC 35685 / KC583 / Herrer 020/F12,63) protein is Argininosuccinate lyase.